Reading from the N-terminus, the 112-residue chain is MPPKNCTHLGGCNSDCLTRSEIQALFREAINTLKHTMNTEDVCAHMLDIVSFERIKEYIRANLGHFTVITDKCSKRKVCLHHKRIARLLGIKKIYHQEYKRVVSKVYKNQTW.

Belongs to the baculoviridae LEF-11 family.

In terms of biological role, involved in late/very late gene activation. In Bombyx mori nuclear polyhedrosis virus (BmNPV), this protein is Late expression factor 11 (LEF-11).